The primary structure comprises 250 residues: Flavin-dependent thymidylate synthase (250 aa).

A ThyX domain is found at 7-233; it reads LRVQLIAKTD…PSIFGDFDIA (227 aa). Residues Ser71, 95-97, and Gln103 each bind FAD; that span reads RHR. DUMP is bound by residues 92–95, 103–107, and Arg172; these read ELIR and QLSQR. The ThyX motif motif lies at 95–105; sequence RHRHFSYSQLS. FAD contacts are provided by residues 188–190 and His194; that span reads NYR. Arg199 lines the dUMP pocket. Residue Arg199 is the Involved in ionization of N3 of dUMP, leading to its activation of the active site.

This sequence belongs to the thymidylate synthase ThyX family. As to quaternary structure, homotetramer. It depends on FAD as a cofactor.

The enzyme catalyses dUMP + (6R)-5,10-methylene-5,6,7,8-tetrahydrofolate + NADPH + H(+) = dTMP + (6S)-5,6,7,8-tetrahydrofolate + NADP(+). Its pathway is pyrimidine metabolism; dTTP biosynthesis. In terms of biological role, catalyzes the reductive methylation of 2'-deoxyuridine-5'-monophosphate (dUMP) to 2'-deoxythymidine-5'-monophosphate (dTMP) while utilizing 5,10-methylenetetrahydrofolate (mTHF) as the methyl donor, and NADPH and FADH(2) as the reductant. In Mycobacteroides abscessus (strain ATCC 19977 / DSM 44196 / CCUG 20993 / CIP 104536 / JCM 13569 / NCTC 13031 / TMC 1543 / L948) (Mycobacterium abscessus), this protein is Flavin-dependent thymidylate synthase.